A 2139-amino-acid polypeptide reads, in one-letter code: Voltage-dependent L-type calcium channel subunit alpha-1C (2139 aa).

Residues 1–20 are disordered; sequence MVNENTRMYVPEENHQGSNY. Residues 1 to 124 lie on the Cytoplasmic side of the membrane; sequence MVNENTRMYV…RACISIVEWK (124 aa). The calmodulin-binding stretch occupies residues 47–68; that stretch reads GAALSWQAAIDAARQAKLMGSA. Positions 73–98 are disordered; the sequence is ISTVSSTQRKRQQYGKPKKQGGTTAT. The segment covering 80 to 91 has biased composition (basic residues); sequence QRKRQQYGKPKK. The I repeat unit spans residues 111–408; the sequence is NPIRRACISI…LVLGVLSGEF (298 aa). A helical transmembrane segment spans residues 125-143; the sequence is PFEIIILLTIFANCVALAI. The Extracellular portion of the chain corresponds to 144 to 158; it reads YIPFPEDDSNATNSN. An N-linked (GlcNAc...) asparagine glycan is attached at N153. Residues 159–179 traverse the membrane as a helical segment; sequence LERVEYLFLIIFTVEAFLKVI. At 180–188 the chain is on the cytoplasmic side; sequence AYGLLFHPN. The chain crosses the membrane as a helical span at residues 189–209; the sequence is AYLRNGWNLLDFIIVVVGLFS. At 210–232 the chain is on the extracellular side; it reads AILEQATKADGANALGGKGAGFD. A helical transmembrane segment spans residues 233-251; sequence VKALRAFRVLRPLRLVSGV. The Cytoplasmic segment spans residues 252–268; that stretch reads PSLQVVLNSIIKAMVPL. Residues 269-290 traverse the membrane as a helical segment; that stretch reads LHIALLVLFVIIIYAIIGLELF. Residues 291 to 350 lie on the Extracellular side of the membrane; the sequence is MGKMHKTCYNQEGIIDVPAEEDPSPCALETGHGRQCQNGTVCKPGWDGPKHGITNFDNFA. 2 cysteine pairs are disulfide-bonded: C298-C326 and C316-C332. Residue N328 is glycosylated (N-linked (GlcNAc...) asparagine). Residues 351-372 constitute an intramembrane region (pore-forming); it reads FAMLTVFQCITMEGWTDVLYWM. Positions 361 to 364 match the Selectivity filter of repeat I motif; that stretch reads TMEG. E363 contributes to the Ca(2+) binding site. Topologically, residues 373-380 are extracellular; that stretch reads QDAMGYEL. A helical transmembrane segment spans residues 381 to 401; the sequence is PWVYFVSLVIFGSFFVLNLVL. Residues 402-524 lie on the Cytoplasmic side of the membrane; the sequence is GVLSGEFSKE…RKCRAAVKSN (123 aa). The AID/alpha-interaction domain; mediates interaction with the beta subunit stretch occupies residues 428–445; sequence QQLEEDLKGYLDWITQAE. Residues 449–481 are disordered; sequence PENEDEGMDEDKPRNMSMPTSETESVNTENVAG. The span at 465–478 shows a compositional bias: polar residues; sequence SMPTSETESVNTEN. At S469 the chain carries Phosphoserine. T476 carries the post-translational modification Phosphothreonine. One copy of the II repeat lies at 510–756; that stretch reads NRFCRRKCRA…VFLAIAVDNL (247 aa). The helical transmembrane segment at 525-543 threads the bilayer; sequence VFYWLVIFLVFLNTLTIAS. Topologically, residues 544–554 are extracellular; sequence EHYNQPHWLTE. A helical transmembrane segment spans residues 555–575; that stretch reads VQDTANKALLALFTAEMLLKM. At 576 to 586 the chain is on the cytoplasmic side; that stretch reads YSLGLQAYFVS. A helical transmembrane segment spans residues 587 to 606; it reads LFNRFDCFIVCGGILETILV. Topologically, residues 607 to 615 are extracellular; that stretch reads ETKIMSPLG. A helical transmembrane segment spans residues 616–634; the sequence is ISVLRCVRLLRIFKITRYW. At 635–653 the chain is on the cytoplasmic side; the sequence is NSLSNLVASLLNSVRSIAS. Residues 654–673 form a helical membrane-spanning segment; the sequence is LLLLLFLFIIIFSLLGMQLF. Residues 674–693 lie on the Extracellular side of the membrane; that stretch reads GGKFNFDEMQTRRSTFDNFP. Residues 694–715 constitute an intramembrane region (pore-forming); sequence QSLLTVFQILTGEDWNSVMYDG. The Selectivity filter of repeat II signature appears at 704 to 707; it reads TGED. E706 contributes to the Ca(2+) binding site. Residues 716-725 lie on the Extracellular side of the membrane; sequence IMAYGGPSFP. A helical membrane pass occupies residues 726–745; that stretch reads GMLVCIYFIILFICGNYILL. Residues 746 to 900 lie on the Cytoplasmic side of the membrane; it reads NVFLAIAVDN…LQCHRIVNDT (155 aa). A disordered region spans residues 764-861; sequence SAQKEEEEEK…EMPVGPRPRP (98 aa). The segment covering 783 to 806 has biased composition (basic and acidic residues); that stretch reads SPEKKQEVMEKPAVEESKEEKIEL. Residues S808 and S815 each carry the phosphoserine modification. The tract at residues 829 to 876 is interaction with STAC2; the sequence is SENEDKSPHSNPDTAGEEDEEEPEMPVGPRPRPLSELHLKEKAVPMPE. Residues 843-852 are compositionally biased toward acidic residues; that stretch reads AGEEDEEEPE. The III repeat unit spans residues 887–1169; that stretch reads NRFRLQCHRI…IFVGFVIVTF (283 aa). A helical transmembrane segment spans residues 901 to 919; it reads IFTNLILFFILLSSISLAA. The Extracellular portion of the chain corresponds to 920-931; it reads EDPVQHTSFRNH. The chain crosses the membrane as a helical span at residues 932–951; that stretch reads ILGNADYVFTSIFTLEIILK. At 952–967 the chain is on the cytoplasmic side; sequence MTAYGAFLHKGSFCRN. The chain crosses the membrane as a helical span at residues 968 to 986; that stretch reads YFNILDLLVVSVSLISFGI. Over 987–993 the chain is Extracellular; the sequence is QSSAINV. A helical transmembrane segment spans residues 994 to 1012; it reads VKILRVLRVLRPLRAINRA. At 1013 to 1031 the chain is on the cytoplasmic side; sequence KGLKHVVQCVFVAIRTIGN. The helical transmembrane segment at 1032-1051 threads the bilayer; it reads IVIVTTLLQFMFACIGVQLF. Residues 1052–1101 lie on the Extracellular side of the membrane; sequence KGKLYTCSDSSKQTEAECKGNYITYKDGEVDHPIIQPRSWENSKFDFDNV. C1058 and C1069 form a disulfide bridge. The tract at residues 1089–1178 is dihydropyridine binding; it reads RSWENSKFDF…FQEQGEQEYK (90 aa). The pore-forming intramembrane region spans 1102-1122; it reads LAAMMALFTVSTFEGWPELLY. The short motif at 1113-1116 is the Selectivity filter of repeat III element; it reads TFEG. E1115 lines the Ca(2+) pocket. The Extracellular portion of the chain corresponds to 1123 to 1139; it reads RSIDSHTEDKGPIYNYR. The helical transmembrane segment at 1140–1161 threads the bilayer; the sequence is VEISIFFIIYIIIIAFFMMNIF. Residues 1162–1219 lie on the Cytoplasmic side of the membrane; the sequence is VGFVIVTFQEQGEQEYKNCELDKNQRQCVEYALKARPLRRYIPKNQHQYKVWYVVNST. Residues 1206–1479 form an IV repeat; it reads NQHQYKVWYV…LFVAVIMDNF (274 aa). Residues 1220 to 1241 traverse the membrane as a helical segment; sequence YFEYLMFVLILLNTICLAMQHY. At 1242 to 1249 the chain is on the extracellular side; that stretch reads GQSCLFKI. A helical membrane pass occupies residues 1250-1271; it reads AMNILNMLFTGLFTVEMILKLI. Topologically, residues 1272–1281 are cytoplasmic; the sequence is AFKPKGYFSD. Residues 1282–1301 form a helical membrane-spanning segment; it reads PWNVFDFLIVIGSIIDVILS. The Extracellular segment spans residues 1302 to 1324; sequence ETNPAEHTQCSPSMSAEENSRIS. The chain crosses the membrane as a helical span at residues 1325–1343; the sequence is ITFFRLFRVMRLVKLLSRG. Topologically, residues 1344–1361 are cytoplasmic; the sequence is EGIRTLLWTFIKSFQALP. The helical transmembrane segment at 1362–1382 threads the bilayer; that stretch reads YVALLIVMLFFIYAVIGMQVF. At 1383 to 1404 the chain is on the extracellular side; sequence GKIALNDTTEINRNNNFQTFPQ. An N-linked (GlcNAc...) asparagine glycan is attached at N1388. The segment at residues 1405–1423 is an intramembrane region (pore-forming); it reads AVLLLFRCATGEAWQDIML. The short motif at 1414-1417 is the Selectivity filter of repeat IV element; that stretch reads TGEA. The Extracellular segment spans residues 1424–1451; that stretch reads ACMPGKKCAPESEPSNSTEGETPCGSSF. The interval 1430 to 1498 is dihydropyridine binding; that stretch reads KCAPESEPSN…LGPHHLDEFK (69 aa). The cysteines at positions 1431 and 1447 are disulfide-linked. An N-linked (GlcNAc...) asparagine glycan is attached at N1439. The interval 1444–1486 is phenylalkylamine binding; the sequence is ETPCGSSFAVFYFISFYMLCAFLIINLFVAVIMDNFDYLTRDW. Residues 1452 to 1476 traverse the membrane as a helical segment; that stretch reads AVFYFISFYMLCAFLIINLFVAVIM. Topologically, residues 1477–2139 are cytoplasmic; that stretch reads DNFDYLTRDW…ADSRSYVSNL (663 aa). Positions 1611 to 1638 are important for interaction with STAC1, STAC2 and STAC3; it reads DEVTVGKFYATFLIQEYFRKFKKRKEQG. The tract at residues 1611–1644 is calmodulin-binding; the sequence is DEVTVGKFYATFLIQEYFRKFKKRKEQGLVGKPS. The tract at residues 1617-1637 is calmodulin-binding IQ region; sequence KFYATFLIQEYFRKFKKRKEQ. Positions 1651 to 1670 are important for localization in at the junctional membrane; that stretch reads LQAGLRTLHDIGPEIRRAIS. 2 positions are modified to phosphoserine: S1670 and S1691. Composition is skewed to polar residues over residues 1732–1741 and 1751–1763; these read KTGNNQADTE and STFT…STGS. Residues 1732-1773 form a disordered region; it reads KTGNNQADTESPSHEKLVDSTFTPSSYSSTGSNANINNANNT. The span at 1764 to 1773 shows a compositional bias: low complexity; the sequence is NANINNANNT. The residue at position 1897 (S1897) is a Phosphoserine; by PKA. Residues 1940-1966 form a disordered region; sequence RSHSPTTFPRPCPTPPVTPGSRGRPLR. Residues 1947-1957 show a composition bias toward pro residues; it reads FPRPCPTPPVT.

It belongs to the calcium channel alpha-1 subunit (TC 1.A.1.11) family. CACNA1C subfamily. In terms of assembly, component of a calcium channel complex consisting of a pore-forming alpha subunit (CACNA1C) and ancillary beta, gamma and delta subunits. The channel complex contains alpha, beta, gamma and delta subunits in a 1:1:1:1 ratio, i.e. it contains only one of each type of subunit. CACNA1C channel activity is modulated by ancillary subunits, such as CACNB1, CACNB2, CACNB3, CACNA2D1 and CACNA2D4. Interacts with the gamma subunits CACNG4, CACNG6, CACNG7 and CACNG8. Interacts with CACNB1. Interacts with CACNB2. Identified in a complex with CACNA2D4 and CACNB3. Interacts with CACNB3. Interacts with CACNA2D1. Interacts with CACNA2D4. Interacts with CALM1. Interacts (via the N-terminus and the C-terminal C and IQ motifs) with CABP1; this inhibits Ca(2+)-dependent channel inactivation. The binding via the C motif is calcium independent whereas the binding via IQ requires the presence of calcium and is mutually exclusive with calmodulin binding. The binding to the cytoplasmic N-terminal domain is calcium independent but is essential for the channel modulation. Interacts (via C-terminal CDB motif) with CABP5; in a calcium-dependent manner. Interacts with CIB1; the interaction increases upon cardiomyocytes hypertrophy. Interacts with STAC2 and STAC3; this inhibits channel inactivation. Phosphorylation by PKA at Ser-1897 activates the channel. Elevated levels of blood glucose lead to increased phosphorylation by PKA. In terms of tissue distribution, detected in embryonic heart. Detected in retina in rod bipolar cells. Detected in tibialis artery (at protein level). Detected in smooth muscle cells from tibialis artery and in mesenteric artery. High expression in heart, followed by brain and spinal cord.

It localises to the cell membrane. It is found in the sarcolemma. Its subcellular location is the perikaryon. The protein localises to the postsynaptic density membrane. The protein resides in the cell projection. It localises to the dendrite. It is found in the T-tubule. The enzyme catalyses Ca(2+)(in) = Ca(2+)(out). Inhibited by dihydropyridines (DHP), such as isradipine. Inhibited by nifedipine. Channel activity is regulated by Ca(2+) and calmodulin. Binding of STAC1, STAC2 or STAC3 to a region that overlaps with the calmodulin binding site inhibits channel inactivation by Ca(2+) and calmodulin. Binding of calmodulin or CABP1 at the same regulatory sites results in opposite effects on the channel function. Shear stress and pressure increases calcium channel activity. Pore-forming, alpha-1C subunit of the voltage-gated calcium channel that gives rise to L-type calcium currents. Mediates influx of calcium ions into the cytoplasm, and thereby triggers calcium release from the sarcoplasm. Plays an important role in excitation-contraction coupling in the heart. Required for normal heart development and normal regulation of heart rhythm. Required for normal contraction of smooth muscle cells in blood vessels and in the intestine. Essential for normal blood pressure regulation via its role in the contraction of arterial smooth muscle cells. Long-lasting (L-type) calcium channels belong to the 'high-voltage activated' (HVA) group. The chain is Voltage-dependent L-type calcium channel subunit alpha-1C (Cacna1c) from Mus musculus (Mouse).